The following is a 103-amino-acid chain: Pilin (103 aa).

Residues 1–30 form the signal peptide; the sequence is MYRFACRTLMLAACILATGVAGLGVGAQSA. Positions 61–76 are enriched in basic and acidic residues; that stretch reads HDDFHRDSDGPDHSRD. The segment at 61–103 is disordered; sequence HDDFHRDSDGPDHSRDYPGPILEGPVLDDPGAAPPPPAAGGGA. The segment covering 92–103 has biased composition (pro residues); it reads AAPPPPAAGGGA.

Belongs to the mycobacterial pilin family. Forms a homomer composed of subunits assembled in a large structure.

The protein localises to the fimbrium. In terms of biological role, structural subunit of pili, which are thin, flexible, coiled-coil, aggregative fibers. Mediates adhesion to the extracellular matrix, an event that would facilitate direct interaction with the host epithelium during infection in the lung or other tissues. The protein is Pilin (mtp) of Mycobacterium bovis (strain ATCC BAA-935 / AF2122/97).